The primary structure comprises 105 residues: Large ribosomal subunit protein uL24 (105 aa).

Residues R40–T61 form a disordered region.

Belongs to the universal ribosomal protein uL24 family. As to quaternary structure, part of the 50S ribosomal subunit.

Its function is as follows. One of two assembly initiator proteins, it binds directly to the 5'-end of the 23S rRNA, where it nucleates assembly of the 50S subunit. In terms of biological role, one of the proteins that surrounds the polypeptide exit tunnel on the outside of the subunit. The protein is Large ribosomal subunit protein uL24 of Mycobacteroides abscessus (strain ATCC 19977 / DSM 44196 / CCUG 20993 / CIP 104536 / JCM 13569 / NCTC 13031 / TMC 1543 / L948) (Mycobacterium abscessus).